Consider the following 617-residue polypeptide: Proline--tRNA ligase (617 aa).

The protein belongs to the class-II aminoacyl-tRNA synthetase family. ProS type 1 subfamily. As to quaternary structure, homodimer.

Its subcellular location is the cytoplasm. The catalysed reaction is tRNA(Pro) + L-proline + ATP = L-prolyl-tRNA(Pro) + AMP + diphosphate. Functionally, catalyzes the attachment of proline to tRNA(Pro) in a two-step reaction: proline is first activated by ATP to form Pro-AMP and then transferred to the acceptor end of tRNA(Pro). As ProRS can inadvertently accommodate and process non-cognate amino acids such as alanine and cysteine, to avoid such errors it has two additional distinct editing activities against alanine. One activity is designated as 'pretransfer' editing and involves the tRNA(Pro)-independent hydrolysis of activated Ala-AMP. The other activity is designated 'posttransfer' editing and involves deacylation of mischarged Ala-tRNA(Pro). The misacylated Cys-tRNA(Pro) is not edited by ProRS. The chain is Proline--tRNA ligase from Streptococcus agalactiae serotype Ia (strain ATCC 27591 / A909 / CDC SS700).